The chain runs to 132 residues: HLA class I histocompatibility antigen protein P5 (132 aa).

Expressed in lymphoid tissues; Detected in spleen as well as in B-cell lines, NK cell lines and activated lymphocytes.

The protein is HLA class I histocompatibility antigen protein P5 (HCP5) of Homo sapiens (Human).